The primary structure comprises 651 residues: Methionine--tRNA ligase (651 aa).

Positions 10 to 20 (AYTNGPLHLGH) match the 'HIGH' region motif. Positions 142, 145, 154, and 157 each coordinate Zn(2+). Residues 320 to 324 (KMSTS) carry the 'KMSKS' region motif. Residue Thr-323 participates in ATP binding. The 102-residue stretch at 550 to 651 (YLEKIDLRVG…KDIKAGSKVR (102 aa)) folds into the tRNA-binding domain.

The protein belongs to the class-I aminoacyl-tRNA synthetase family. MetG type 1 subfamily. Homodimer. Zn(2+) is required as a cofactor.

The protein localises to the cytoplasm. It catalyses the reaction tRNA(Met) + L-methionine + ATP = L-methionyl-tRNA(Met) + AMP + diphosphate. Is required not only for elongation of protein synthesis but also for the initiation of all mRNA translation through initiator tRNA(fMet) aminoacylation. This chain is Methionine--tRNA ligase, found in Methanocaldococcus jannaschii (strain ATCC 43067 / DSM 2661 / JAL-1 / JCM 10045 / NBRC 100440) (Methanococcus jannaschii).